The chain runs to 147 residues: ATP synthase epsilon chain 2 (147 aa).

This sequence belongs to the ATPase epsilon chain family. F-type ATPases have 2 components, CF(1) - the catalytic core - and CF(0) - the membrane proton channel. CF(1) has five subunits: alpha(3), beta(3), gamma(1), delta(1), epsilon(1). CF(0) has three main subunits: a, b and c.

It is found in the cell inner membrane. In terms of biological role, produces ATP from ADP in the presence of a proton gradient across the membrane. This is ATP synthase epsilon chain 2 from Photobacterium profundum (strain SS9).